Reading from the N-terminus, the 1239-residue chain is Inner tegument protein (1239 aa).

Disordered stretches follow at residues 1–20 (MASAMESDSGGGSGGADAQP), 669–704 (GESPQAVGLRPLNLEGEGKAGDAGADGAEDEEGGGP), 959–980 (RPPPVFTPAPRRLPQGGADTPP), and 1087–1239 (GRNA…AEDE). An interaction with large tegument protein region spans residues 615–1239 (NELPKTRSLA…RPPRPTAEDE (625 aa)). The span at 1112 to 1123 (DSSPFSFSSSDF) shows a compositional bias: low complexity. Residues 1139 to 1148 (VPGGGGGGEG) are compositionally biased toward gly residues. Over residues 1151–1170 (EEERERPSDIDTAARARKVE) the composition is skewed to basic and acidic residues. Residues 1180–1189 (RTTPSPSRRA) show a composition bias toward low complexity. Residues 1219–1232 (VRPRTRRGATRRPP) show a composition bias toward basic residues.

This sequence belongs to the herpesviridae inner tegument protein family. As to quaternary structure, interacts (via C-terminus) with the large tegument protein/LTP (via N-terminus).

Its subcellular location is the virion tegument. The protein localises to the host cytoplasm. The protein resides in the host nucleus. It is found in the host Golgi apparatus. It localises to the host trans-Golgi network. Functionally, plays an essential role in cytoplasmic secondary envelopment during viral egress. Interacts with the capsid via the large tegument protein/LTP and participates in its transport to the host trans-Golgi network (TGN) where secondary envelopment occurs. Modulates tegumentation and capsid accumulation at the viral assembly complex. The sequence is that of Inner tegument protein from Homo sapiens (Human).